We begin with the raw amino-acid sequence, 208 residues long: MAEKIPKPVSKRLVSYYMCLERLLDEGVEVVSSEELARRLDLKASQIRKDLSYFGEFGKRGVGYNVEHLYDAIGEILGVKKEWKLVVVGAGNIGRAVSNYAVMREKGFKIVGIFDSDPSKMGKEAAPGLTVSDVSELEKFVEEHGVEIGVIAVPAEHAQEIAERLEKAGIMGILNFAPVKIKVSVPVENIDITASLRVLTFEIVRRNN.

Positions 15 to 54 (SYYMCLERLLDEGVEVVSSEELARRLDLKASQIRKDLSYF) form a DNA-binding region, H-T-H motif. 89-94 (GAGNIG) contacts NAD(+).

This sequence belongs to the transcriptional regulatory Rex family. Homodimer.

The protein localises to the cytoplasm. Modulates transcription in response to changes in cellular NADH/NAD(+) redox state. The sequence is that of Redox-sensing transcriptional repressor Rex from Thermotoga petrophila (strain ATCC BAA-488 / DSM 13995 / JCM 10881 / RKU-1).